Here is a 90-residue protein sequence, read N- to C-terminus: Small ribosomal subunit protein bS20 (90 aa).

The interval 1–25 (MANSPSAKKRAKQAEKRRSHNASLR) is disordered. Basic residues predominate over residues 7-20 (AKKRAKQAEKRRSH).

The protein belongs to the bacterial ribosomal protein bS20 family.

Binds directly to 16S ribosomal RNA. The polypeptide is Small ribosomal subunit protein bS20 (Pseudomonas fluorescens (strain Pf0-1)).